A 470-amino-acid chain; its full sequence is Argininosuccinate lyase (470 aa).

Belongs to the lyase 1 family. Argininosuccinate lyase subfamily.

It is found in the cytoplasm. The enzyme catalyses 2-(N(omega)-L-arginino)succinate = fumarate + L-arginine. The protein operates within amino-acid biosynthesis; L-arginine biosynthesis; L-arginine from L-ornithine and carbamoyl phosphate: step 3/3. This chain is Argininosuccinate lyase, found in Mycolicibacterium vanbaalenii (strain DSM 7251 / JCM 13017 / BCRC 16820 / KCTC 9966 / NRRL B-24157 / PYR-1) (Mycobacterium vanbaalenii).